The following is a 943-amino-acid chain: Isoleucine--tRNA ligase (943 aa).

The 'HIGH' region signature appears at 59-69; sequence PYANGQIHLGH. E577 contributes to the L-isoleucyl-5'-AMP binding site. Residues 618 to 622 carry the 'KMSKS' region motif; that stretch reads KMSKS. K621 serves as a coordination point for ATP. Zn(2+) is bound by residues C906, C909, C926, and C929.

Belongs to the class-I aminoacyl-tRNA synthetase family. IleS type 1 subfamily. As to quaternary structure, monomer. Requires Zn(2+) as cofactor.

The protein resides in the cytoplasm. The enzyme catalyses tRNA(Ile) + L-isoleucine + ATP = L-isoleucyl-tRNA(Ile) + AMP + diphosphate. Functionally, catalyzes the attachment of isoleucine to tRNA(Ile). As IleRS can inadvertently accommodate and process structurally similar amino acids such as valine, to avoid such errors it has two additional distinct tRNA(Ile)-dependent editing activities. One activity is designated as 'pretransfer' editing and involves the hydrolysis of activated Val-AMP. The other activity is designated 'posttransfer' editing and involves deacylation of mischarged Val-tRNA(Ile). The protein is Isoleucine--tRNA ligase of Xylella fastidiosa (strain M23).